Here is a 191-residue protein sequence, read N- to C-terminus: Cdc42 homolog (191 aa).

Residue 10 to 17 (GDGAVGKT) coordinates GTP. Positions 32-40 (YVPTVFDNY) match the Effector region motif. GTP is bound by residues 57–61 (DTAGQ) and 115–118 (TQID). C188 is subject to Cysteine methyl ester. A lipid anchor (S-geranylgeranyl cysteine) is attached at C188. The propeptide at 189-191 (KFL) is removed in mature form.

The protein belongs to the small GTPase superfamily. Rho family. CDC42 subfamily.

It is found in the cell junction. The protein localises to the adherens junction. It localises to the cell membrane. The catalysed reaction is GTP + H2O = GDP + phosphate + H(+). Its function is as follows. Regulates mbt kinase activity and is also required to recruit mbt to adherens junctions. Together with mbt, regulates photoreceptor cell morphogenesis. This chain is Cdc42 homolog, found in Drosophila pseudoobscura pseudoobscura (Fruit fly).